The following is a 100-amino-acid chain: Urease subunit gamma (100 aa).

The protein belongs to the urease gamma subunit family. In terms of assembly, heterotrimer of UreA (gamma), UreB (beta) and UreC (alpha) subunits. Three heterotrimers associate to form the active enzyme.

The protein localises to the cytoplasm. The catalysed reaction is urea + 2 H2O + H(+) = hydrogencarbonate + 2 NH4(+). Its pathway is nitrogen metabolism; urea degradation; CO(2) and NH(3) from urea (urease route): step 1/1. The chain is Urease subunit gamma from Bordetella pertussis (strain Tohama I / ATCC BAA-589 / NCTC 13251).